The following is a 108-amino-acid chain: Phosphoribosyl-ATP pyrophosphatase (108 aa).

This sequence belongs to the PRA-PH family.

The protein localises to the cytoplasm. The catalysed reaction is 1-(5-phospho-beta-D-ribosyl)-ATP + H2O = 1-(5-phospho-beta-D-ribosyl)-5'-AMP + diphosphate + H(+). The protein operates within amino-acid biosynthesis; L-histidine biosynthesis; L-histidine from 5-phospho-alpha-D-ribose 1-diphosphate: step 2/9. This is Phosphoribosyl-ATP pyrophosphatase from Geobacter sulfurreducens (strain ATCC 51573 / DSM 12127 / PCA).